Here is a 150-residue protein sequence, read N- to C-terminus: Large ribosomal subunit protein bL9 (150 aa).

Belongs to the bacterial ribosomal protein bL9 family.

Binds to the 23S rRNA. The protein is Large ribosomal subunit protein bL9 of Shewanella loihica (strain ATCC BAA-1088 / PV-4).